A 334-amino-acid chain; its full sequence is MSGSVAVTRAIAVPGLLLLLIIATALSLLIGAKSLPASVVLEAFSGTCQSADCTIVLDARLPRTLAGLLAGGALGLAGALMQTLTRNPLADPGLLGVNAGASFAIVLGAALFGYSSAQEQLAMAFAGALVASLIVAFTGSQGGGQLSPVRLTLAGVALAAVLEGLTSGIALLNPDVYDQLRFWQAGSLDIRNLHTLKVVLIPVLIAGATALLLSRALNSLSLGSDTATALGSRVARTQLIGLLAITVLCGSATAIVGPIAFIGLMMPHMARWLVGADHRWSLPVTLLATPALLLFADIIGRVIVPGELRVSVVSAFIGAPVLIFLVRRKTRGGA.

Topologically, residues 1-9 (MSGSVAVTR) are periplasmic. Residues 10 to 30 (AIAVPGLLLLLIIATALSLLI) traverse the membrane as a helical segment. Residues 31–63 (GAKSLPASVVLEAFSGTCQSADCTIVLDARLPR) lie on the Cytoplasmic side of the membrane. The chain crosses the membrane as a helical span at residues 64-84 (TLAGLLAGGALGLAGALMQTL). Residues 85–92 (TRNPLADP) are Periplasmic-facing. The helical transmembrane segment at 93–113 (GLLGVNAGASFAIVLGAALFG) threads the bilayer. The Cytoplasmic portion of the chain corresponds to 114–120 (YSSAQEQ). Residues 121-141 (LAMAFAGALVASLIVAFTGSQ) form a helical membrane-spanning segment. Residues 142–151 (GGGQLSPVRL) lie on the Periplasmic side of the membrane. A helical transmembrane segment spans residues 152–172 (TLAGVALAAVLEGLTSGIALL). At 173–192 (NPDVYDQLRFWQAGSLDIRN) the chain is on the cytoplasmic side. A helical transmembrane segment spans residues 193–213 (LHTLKVVLIPVLIAGATALLL). Over 214-241 (SRALNSLSLGSDTATALGSRVARTQLIG) the chain is Periplasmic. Residues 242–262 (LLAITVLCGSATAIVGPIAFI) form a helical membrane-spanning segment. The Cytoplasmic portion of the chain corresponds to 263-279 (GLMMPHMARWLVGADHR). The helical transmembrane segment at 280 to 300 (WSLPVTLLATPALLLFADIIG) threads the bilayer. The Periplasmic portion of the chain corresponds to 301–305 (RVIVP). Residues 306-326 (GELRVSVVSAFIGAPVLIFLV) form a helical membrane-spanning segment. The Cytoplasmic portion of the chain corresponds to 327–334 (RRKTRGGA).

The protein belongs to the binding-protein-dependent transport system permease family. FecCD subfamily. In terms of assembly, the complex is composed of two ATP-binding proteins (FepC), two transmembrane proteins (FepD and FepG) and a solute-binding protein (FepB).

Its subcellular location is the cell inner membrane. Its function is as follows. Part of the ABC transporter complex FepBDGC involved in ferric enterobactin uptake. Responsible for the translocation of the substrate across the membrane. The polypeptide is Ferric enterobactin transport system permease protein FepD (fepD) (Escherichia coli (strain K12)).